The primary structure comprises 160 residues: Inner membrane protein YcdZ (160 aa).

5 helical membrane-spanning segments follow: residues 20–42, 50–70, 72–92, 99–119, and 123–143; these read WGAV…YFAC, LLIS…IIHG, ALAP…AFLM, LLLS…AGQG, and LVLP…NSGL.

This sequence to E.coli YahC.

It is found in the cell inner membrane. This is Inner membrane protein YcdZ (ycdZ) from Salmonella typhimurium (strain LT2 / SGSC1412 / ATCC 700720).